The primary structure comprises 163 residues: Peptidyl-prolyl cis-trans isomerase-like 1 (163 aa).

One can recognise a PPIase cyclophilin-type domain in the interval 1–155; the sequence is MATDVAVETT…TEVKIVKARV (155 aa).

This sequence belongs to the cyclophilin-type PPIase family. PPIL1 subfamily.

The enzyme catalyses [protein]-peptidylproline (omega=180) = [protein]-peptidylproline (omega=0). Its function is as follows. PPIases accelerate the folding of proteins. It catalyzes the cis-trans isomerization of proline imidic peptide bonds in oligopeptides. In Neurospora crassa (strain ATCC 24698 / 74-OR23-1A / CBS 708.71 / DSM 1257 / FGSC 987), this protein is Peptidyl-prolyl cis-trans isomerase-like 1 (ppi-1).